The primary structure comprises 423 residues: GTPase Obg (423 aa).

An Obg domain is found at 1–158 (MFYDEAKIYV…RWLVLELKLL (158 aa)). The OBG-type G domain occupies 159–328 (ADVGLIGLPN…LLYHVSGLLA (170 aa)). Residues 165-172 (GLPNAGKS), 190-194 (FTTLT), 212-215 (DIPG), 281-284 (NKMD), and 309-311 (SAA) contribute to the GTP site. Serine 172 and threonine 192 together coordinate Mg(2+). Residues 336-421 (VTAPEEEKVT…IGKFEFEYVE (86 aa)) form the OCT domain.

It belongs to the TRAFAC class OBG-HflX-like GTPase superfamily. OBG GTPase family. In terms of assembly, monomer. Mg(2+) is required as a cofactor.

It localises to the cytoplasm. An essential GTPase which binds GTP, GDP and possibly (p)ppGpp with moderate affinity, with high nucleotide exchange rates and a fairly low GTP hydrolysis rate. Plays a role in control of the cell cycle, stress response, ribosome biogenesis and in those bacteria that undergo differentiation, in morphogenesis control. In Moorella thermoacetica (strain ATCC 39073 / JCM 9320), this protein is GTPase Obg.